A 343-amino-acid chain; its full sequence is Ribosomal RNA small subunit methyltransferase C (343 aa).

Belongs to the methyltransferase superfamily. RsmC family. As to quaternary structure, monomer.

The protein localises to the cytoplasm. It carries out the reaction guanosine(1207) in 16S rRNA + S-adenosyl-L-methionine = N(2)-methylguanosine(1207) in 16S rRNA + S-adenosyl-L-homocysteine + H(+). Functionally, specifically methylates the guanine in position 1207 of 16S rRNA in the 30S particle. In Escherichia coli O17:K52:H18 (strain UMN026 / ExPEC), this protein is Ribosomal RNA small subunit methyltransferase C.